We begin with the raw amino-acid sequence, 219 residues long: Guanylate kinase (219 aa).

The Guanylate kinase-like domain maps to 15-194 (GLMFVLSSPS…AFAEVQSILK (180 aa)). Residue 22–29 (SPSGAGKT) coordinates ATP.

This sequence belongs to the guanylate kinase family.

It is found in the cytoplasm. The enzyme catalyses GMP + ATP = GDP + ADP. Essential for recycling GMP and indirectly, cGMP. The sequence is that of Guanylate kinase from Nitrobacter winogradskyi (strain ATCC 25391 / DSM 10237 / CIP 104748 / NCIMB 11846 / Nb-255).